Consider the following 346-residue polypeptide: UDP-3-O-acylglucosamine N-acyltransferase (346 aa).

Histidine 253 functions as the Proton acceptor in the catalytic mechanism.

It belongs to the transferase hexapeptide repeat family. LpxD subfamily. In terms of assembly, homotrimer.

The catalysed reaction is a UDP-3-O-[(3R)-3-hydroxyacyl]-alpha-D-glucosamine + a (3R)-hydroxyacyl-[ACP] = a UDP-2-N,3-O-bis[(3R)-3-hydroxyacyl]-alpha-D-glucosamine + holo-[ACP] + H(+). Its pathway is bacterial outer membrane biogenesis; LPS lipid A biosynthesis. In terms of biological role, catalyzes the N-acylation of UDP-3-O-acylglucosamine using 3-hydroxyacyl-ACP as the acyl donor. Is involved in the biosynthesis of lipid A, a phosphorylated glycolipid that anchors the lipopolysaccharide to the outer membrane of the cell. This is UDP-3-O-acylglucosamine N-acyltransferase from Rickettsia typhi (strain ATCC VR-144 / Wilmington).